Here is a 347-residue protein sequence, read N- to C-terminus: Ribosomal RNA small subunit methyltransferase C (347 aa).

It belongs to the methyltransferase superfamily. RsmC family. Monomer.

It localises to the cytoplasm. It catalyses the reaction guanosine(1207) in 16S rRNA + S-adenosyl-L-methionine = N(2)-methylguanosine(1207) in 16S rRNA + S-adenosyl-L-homocysteine + H(+). Functionally, specifically methylates the guanine in position 1207 of 16S rRNA in the 30S particle. The sequence is that of Ribosomal RNA small subunit methyltransferase C from Yersinia pseudotuberculosis serotype O:1b (strain IP 31758).